The primary structure comprises 460 residues: Muscarinic acetylcholine receptor M1 (460 aa).

At 1-22 (MNTSAPPAVSPNITVLAPGKGP) the chain is on the extracellular side. Asn-2 and Asn-12 each carry an N-linked (GlcNAc...) asparagine glycan. Residues 23–48 (WQVAFIGITTGLLSLATVTGNLLVLI) traverse the membrane as a helical segment. Topologically, residues 49–62 (SFKVNTELKTVNNY) are cytoplasmic. A helical transmembrane segment spans residues 63 to 84 (FLLSLACADLIIGTFSMNLYTT). The Extracellular portion of the chain corresponds to 85-95 (YLLMGHWALGT). A helical membrane pass occupies residues 96–121 (LACDLWLALDYVASNASVMNLLLISF). A disulfide bridge links Cys-98 with Cys-178. Residues 122 to 142 (DRYFSVTRPLSYRAKRTPRRA) lie on the Cytoplasmic side of the membrane. A helical membrane pass occupies residues 143–164 (ALMIGLAWLVSFVLWAPAILFW). Over 165-185 (QYLVGERTVLAGQCYIQFLSQ) the chain is Extracellular. The chain crosses the membrane as a helical span at residues 186-209 (PIITFGTAMAAFYLPVTVMCTLYW). The Cytoplasmic segment spans residues 210–366 (RIYRETENRA…LVKEKKAART (157 aa)). Disordered regions lie at residues 225–256 (LQGS…ETPP), 274–296 (WKEE…GEEP), and 310–351 (EAQA…QLAK). Thr-230 bears the Phosphothreonine mark. The span at 238–247 (SSSSERSQPG) shows a compositional bias: low complexity. The span at 328-343 (RPTRKGRERAGKGQKP) shows a compositional bias: basic residues. The helical transmembrane segment at 367-390 (LSAILLAFIVTWTPYNIMVLVSTF) threads the bilayer. Residues 391–397 (CKDCVPE) lie on the Extracellular side of the membrane. The chain crosses the membrane as a helical span at residues 398-420 (TLWELGYWLCYVNSTINPMCYAL). At 421–460 (CNKAFRDTFRLLLLCRWDKRRWRKIPKRPGSVHRTPSRQC) the chain is on the cytoplasmic side. At Thr-428 the chain carries Phosphothreonine. Ser-451 is subject to Phosphoserine. A Phosphothreonine modification is found at Thr-455. Ser-457 is modified (phosphoserine).

It belongs to the G-protein coupled receptor 1 family. Muscarinic acetylcholine receptor subfamily. CHRM1 sub-subfamily. As to quaternary structure, interacts with GPRASP2. Interacts with TMEM147.

It is found in the cell membrane. The protein resides in the postsynaptic cell membrane. In terms of biological role, the muscarinic acetylcholine receptor mediates various cellular responses, including inhibition of adenylate cyclase, breakdown of phosphoinositides and modulation of potassium channels through the action of G proteins. Primary transducing effect is Pi turnover. The polypeptide is Muscarinic acetylcholine receptor M1 (CHRM1) (Sus scrofa (Pig)).